A 71-amino-acid polypeptide reads, in one-letter code: Small ribosomal subunit protein bS21 (71 aa).

Belongs to the bacterial ribosomal protein bS21 family.

The polypeptide is Small ribosomal subunit protein bS21 (Wigglesworthia glossinidia brevipalpis).